The chain runs to 1130 residues: Alpha-mannosidase 2 (1130 aa).

Residues 1 to 14 are Cytoplasmic-facing; sequence MRTRVLRCRPFSTR. A helical; Signal-anchor for type II membrane protein transmembrane segment spans residues 15 to 35; sequence ILLLLLFVLAFGVYCYFYNAS. The Lumenal segment spans residues 36–1130; it reads PQNYNKPRIS…MEVKTYKIRF (1095 aa). Asn117 carries N-linked (GlcNAc...) asparagine glycosylation. Residues His133 and Asp135 each contribute to the Zn(2+) site. The N-linked (GlcNAc...) asparagine glycan is linked to Asn166. The Zn(2+) site is built by Asp247 and His527. Asp247 functions as the Nucleophile in the catalytic mechanism. N-linked (GlcNAc...) asparagine glycans are attached at residues Asn622, Asn683, Asn1056, and Asn1095.

It belongs to the glycosyl hydrolase 38 family. In terms of assembly, homodimer; disulfide-linked. It depends on Zn(2+) as a cofactor. Post-translationally, N-glycosylated.

Its subcellular location is the microsome membrane. The protein localises to the golgi apparatus membrane. It carries out the reaction N(4)-{beta-D-GlcNAc-(1-&gt;2)-alpha-D-Man-(1-&gt;3)-[alpha-D-Man-(1-&gt;3)-[alpha-D-Man-(1-&gt;6)]-alpha-D-Man-(1-&gt;6)]-beta-D-Man-(1-&gt;4)-beta-D-GlcNAc-(1-&gt;4)-beta-D-GlcNAc}-L-asparaginyl-[protein] + 2 H2O = 2 alpha-D-mannopyranose + an N(4)-{beta-D-GlcNAc-(1-&gt;2)-alpha-D-Man-(1-&gt;3)-[alpha-D-Man-(1-&gt;6)]-beta-D-Man-(1-&gt;4)-beta-D-GlcNAc-(1-&gt;4)-beta-D-GlcNAc}-L-asparaginyl-[protein]. It participates in protein modification; protein glycosylation. Its activity is regulated as follows. Inhibited by swainsonine. Catalyzes the first committed step in the biosynthesis of complex N-glycans. It controls conversion of high mannose to complex N-glycans; the final hydrolytic step in the N-glycan maturation pathway. In Spodoptera frugiperda (Fall armyworm), this protein is Alpha-mannosidase 2.